The following is a 102-amino-acid chain: Acid shock protein (102 aa).

The signal sequence occupies residues 1–21 (MKKVLALVVAAAMGLSSAAFA). Residues 21–41 (AAETTTTPAPTATTTKAAPAK) are compositionally biased toward low complexity. Residues 21–102 (AAETTTTPAP…PAKPAAQPAA (82 aa)) are disordered. Residues 22-58 (AETTTTPAPTATTTKAAPAKTTHHKKQHKAAPAQKAQ) constitute a propeptide that is removed on maturation. The span at 80–90 (AAKKHAKKHSH) shows a compositional bias: basic residues. A compositionally biased stretch (low complexity) spans 91 to 102 (QQPAKPAAQPAA).

This sequence belongs to the Asr family. In terms of processing, proteolytic processing gives rise to the active protein.

Its subcellular location is the periplasm. In terms of biological role, required for growth and/or survival at acidic conditions. The sequence is that of Acid shock protein from Escherichia coli (strain K12 / MC4100 / BW2952).